The following is a 350-amino-acid chain: Uroporphyrinogen decarboxylase (350 aa).

Substrate contacts are provided by residues 27–31, F46, D76, Y152, S207, and H321; that span reads RQAGR.

The protein belongs to the uroporphyrinogen decarboxylase family. In terms of assembly, homodimer.

It is found in the cytoplasm. The enzyme catalyses uroporphyrinogen III + 4 H(+) = coproporphyrinogen III + 4 CO2. The protein operates within porphyrin-containing compound metabolism; protoporphyrin-IX biosynthesis; coproporphyrinogen-III from 5-aminolevulinate: step 4/4. In terms of biological role, catalyzes the decarboxylation of four acetate groups of uroporphyrinogen-III to yield coproporphyrinogen-III. The polypeptide is Uroporphyrinogen decarboxylase (Listeria welshimeri serovar 6b (strain ATCC 35897 / DSM 20650 / CCUG 15529 / CIP 8149 / NCTC 11857 / SLCC 5334 / V8)).